The primary structure comprises 575 residues: Phosphoenolpyruvate-protein phosphotransferase (575 aa).

Residue His-189 is the Tele-phosphohistidine intermediate of the active site. Phosphoenolpyruvate contacts are provided by Arg-296 and Arg-332. The Mg(2+) site is built by Glu-431 and Asp-455. Phosphoenolpyruvate-binding positions include 454–455 and Arg-465; that span reads ND. Residue Cys-502 is the Proton donor of the active site.

Belongs to the PEP-utilizing enzyme family. Homodimer. The cofactor is Mg(2+).

The protein resides in the cytoplasm. It catalyses the reaction L-histidyl-[protein] + phosphoenolpyruvate = N(pros)-phospho-L-histidyl-[protein] + pyruvate. Functionally, general (non sugar-specific) component of the phosphoenolpyruvate-dependent sugar phosphotransferase system (sugar PTS). This major carbohydrate active-transport system catalyzes the phosphorylation of incoming sugar substrates concomitantly with their translocation across the cell membrane. Enzyme I transfers the phosphoryl group from phosphoenolpyruvate (PEP) to the phosphoryl carrier protein (HPr). The protein is Phosphoenolpyruvate-protein phosphotransferase (ptsI) of Haemophilus influenzae (strain ATCC 51907 / DSM 11121 / KW20 / Rd).